A 185-amino-acid polypeptide reads, in one-letter code: N-alpha-acetyltransferase 30 (185 aa).

In terms of domain architecture, N-acetyltransferase spans 31 to 179 (IEYIPYQGES…DAVRLLLPLN (149 aa)).

The protein belongs to the acetyltransferase family. MAK3 subfamily.

Probable catalytic component of a complex displaying alpha (N-terminal) acetyltransferase activity. This chain is N-alpha-acetyltransferase 30, found in Dictyostelium discoideum (Social amoeba).